We begin with the raw amino-acid sequence, 414 residues long: MKIYLVGGAVRDTLLKQTVVDKDYVVVGSSVEEMLALGYQQVGKDFPVFLHPKTQQEYALARTERKTGYGYQGFSCDANKDVTLSEDLLRRDLTINAIAQDEHGTLTDPFHGIADINAKILRHVSDAFTEDPLRVLRVARFAARFHHLGFTIAPETLQLMTDIANSGELDHLTPERVWQECDKALSSQSPQVFFDVLKQCQALIVLFPEVDALFGVPQPEKWHPEIDTGIHTLMVLEQTSLLSDNKAVRFAALVHDLGKALTPKQDWPKHYGHGQKGLPVIKKLCARIRVPNEYRDLALLVSDQHQNIHNAFELRAETIVKLFDKGDFWRKPQRLTELLLCCHGDLRGRTGFEQSSYPQAEYLLHCYELASNVDVQSIIAAGYQGSQIKSQLQLNRAETINNYKIQYIESKQLH.

Positions 8 and 11 each coordinate ATP. Residues Gly8 and Arg11 each coordinate CTP. Positions 21 and 23 each coordinate Mg(2+). The ATP site is built by Arg91, Arg137, and Arg140. Positions 91, 137, and 140 each coordinate CTP. One can recognise an HD domain in the interval 228–329 (TGIHTLMVLE…VKLFDKGDFW (102 aa)).

This sequence belongs to the tRNA nucleotidyltransferase/poly(A) polymerase family. Bacterial CCA-adding enzyme type 1 subfamily. As to quaternary structure, monomer. Can also form homodimers and oligomers. The cofactor is Mg(2+). It depends on Ni(2+) as a cofactor.

It catalyses the reaction a tRNA precursor + 2 CTP + ATP = a tRNA with a 3' CCA end + 3 diphosphate. The enzyme catalyses a tRNA with a 3' CCA end + 2 CTP + ATP = a tRNA with a 3' CCACCA end + 3 diphosphate. In terms of biological role, catalyzes the addition and repair of the essential 3'-terminal CCA sequence in tRNAs without using a nucleic acid template. Adds these three nucleotides in the order of C, C, and A to the tRNA nucleotide-73, using CTP and ATP as substrates and producing inorganic pyrophosphate. tRNA 3'-terminal CCA addition is required both for tRNA processing and repair. Also involved in tRNA surveillance by mediating tandem CCA addition to generate a CCACCA at the 3' terminus of unstable tRNAs. While stable tRNAs receive only 3'-terminal CCA, unstable tRNAs are marked with CCACCA and rapidly degraded. The sequence is that of Multifunctional CCA protein from Shewanella frigidimarina (strain NCIMB 400).